The primary structure comprises 465 residues: Sodium-dependent phosphate transport protein 1 (465 aa).

Asn-39, Asn-47, and Asn-56 each carry an N-linked (GlcNAc...) asparagine glycan. The next 10 helical transmembrane spans lie at 79-99, 117-137, 176-196, 199-219, 260-280, 299-319, 337-357, 363-383, 399-419, and 431-451; these read GLVL…VGYL, SVLS…VIVC, FVMG…LLGW, VFYI…ILLF, LPLW…NLLV, GLLS…AGQM, LFTT…LYLS, TVIF…GQLI, VTAL…GLIL, and FFLM…FAKG.

Belongs to the major facilitator superfamily. Sodium/anion cotransporter family. In terms of assembly, interacts with PDZK1.

The protein localises to the apical cell membrane. It catalyses the reaction 3 Na(+)(out) + phosphate(out) = 3 Na(+)(in) + phosphate(in). The catalysed reaction is urate(out) = urate(in). In terms of biological role, important for the resorption of phosphate by the kidney. May be involved in actively transporting phosphate into cells via Na(+) cotransport in the renal brush border membrane. Plays a role in urate transport in the kidney. The protein is Sodium-dependent phosphate transport protein 1 (Slc17a1) of Rattus norvegicus (Rat).